Reading from the N-terminus, the 907-residue chain is Protein translocase subunit SecA (907 aa).

Residues glutamine 87, 105-109 (GEGKT), and aspartate 512 each bind ATP. Positions 834-907 (QEDVERMEEQ…KKYKQCHGKI (74 aa)) are disordered. 2 stretches are compositionally biased toward basic and acidic residues: residues 836-853 (DVERMEEQRRLQAEEAAR) and 873-888 (EEAHSPMVREERKVGR). Residues cysteine 892, cysteine 894, cysteine 903, and histidine 904 each contribute to the Zn(2+) site. The span at 898–907 (KKYKQCHGKI) shows a compositional bias: basic residues.

This sequence belongs to the SecA family. Monomer and homodimer. Part of the essential Sec protein translocation apparatus which comprises SecA, SecYEG and auxiliary proteins SecDF-YajC and YidC. The cofactor is Zn(2+).

The protein resides in the cell inner membrane. It localises to the cytoplasm. The catalysed reaction is ATP + H2O + cellular proteinSide 1 = ADP + phosphate + cellular proteinSide 2.. Functionally, part of the Sec protein translocase complex. Interacts with the SecYEG preprotein conducting channel. Has a central role in coupling the hydrolysis of ATP to the transfer of proteins into and across the cell membrane, serving both as a receptor for the preprotein-SecB complex and as an ATP-driven molecular motor driving the stepwise translocation of polypeptide chains across the membrane. The chain is Protein translocase subunit SecA from Aliivibrio fischeri (strain ATCC 700601 / ES114) (Vibrio fischeri).